A 342-amino-acid polypeptide reads, in one-letter code: Heat-inducible transcription repressor HrcA (342 aa).

Belongs to the HrcA family.

Its function is as follows. Negative regulator of class I heat shock genes (grpE-dnaK-dnaJ and groELS operons). Prevents heat-shock induction of these operons. The sequence is that of Heat-inducible transcription repressor HrcA from Oceanobacillus iheyensis (strain DSM 14371 / CIP 107618 / JCM 11309 / KCTC 3954 / HTE831).